A 308-amino-acid polypeptide reads, in one-letter code: MANITAAMVKELREKTGAGMMDCKGALNETQGDIEAAVDWLRKKGLAKAAKKAGRVAAEGLVAVESAGHHAAVVEVNSETDFVARNDAFQAFAREAAKIALNTDGTLEGLQTAHFPGATETVSEKLQALIATIGENMNLRRVTKLEVKKGVIASYVHNQISEGLGKIGVLVALESEGDVDALSALGRQIAMHIAATNPVALDASGVDAATVERESNILREKNAGKPDHVLAKIIESGLKSYYKEVTLLEQPFVHDGSKTVSQVLKEAGSKVGGPVTLTGFVRYALGDGIEKEEGPDFATEVAQQAGRA.

An involved in Mg(2+) ion dislocation from EF-Tu region spans residues 80–83; it reads TDFV.

It belongs to the EF-Ts family.

It localises to the cytoplasm. In terms of biological role, associates with the EF-Tu.GDP complex and induces the exchange of GDP to GTP. It remains bound to the aminoacyl-tRNA.EF-Tu.GTP complex up to the GTP hydrolysis stage on the ribosome. This is Elongation factor Ts from Methylobacterium radiotolerans (strain ATCC 27329 / DSM 1819 / JCM 2831 / NBRC 15690 / NCIMB 10815 / 0-1).